The sequence spans 110 residues: UPF0122 protein SPG_1182 (110 aa).

Belongs to the UPF0122 family.

Its function is as follows. Might take part in the signal recognition particle (SRP) pathway. This is inferred from the conservation of its genetic proximity to ftsY/ffh. May be a regulatory protein. The chain is UPF0122 protein SPG_1182 from Streptococcus pneumoniae serotype 19F (strain G54).